We begin with the raw amino-acid sequence, 311 residues long: MSDFTEQTLRQKLANLSNHSNSIQTTSSWLLKNHNNREIIIRVWLKTVRKENKGAKVVNLLYVANDVAQNARKACPQFKDDFFPAIESAFRHCCELKAKEVENAIGKLIHVWKERQIYSQSQCKRLQEAHQQMKLSGSFPSPAGRNNGKNSQPNQFIVEEAKKNAQDVLVSLKRLQNPPSTERDIRIQLSKYPDNISCPEKLQSVQNSEEAKALLTQNEEALPMLEDYVKRLKEETKERESLETNLNMLIQNVRMSIEHHEKLCRDVKRKEDRIKADLLEVEKTFESLPDLTAEMPNAPLPTLEALFQKRK.

The 134-residue stretch at 1–134 (MSDFTEQTLR…RLQEAHQQMK (134 aa)) folds into the CID domain. Residues 224-256 (MLEDYVKRLKEETKERESLETNLNMLIQNVRMS) are a coiled coil.

The polypeptide is CID domain-containing protein 1 (cids-1) (Caenorhabditis briggsae).